The primary structure comprises 656 residues: RNA-binding protein EWS (656 aa).

An EAD (Gln/Pro/Thr-rich) region spans residues 1 to 285 (MASTDYSTYS…GVYGQESGGF (285 aa)). 31 consecutive repeat copies span residues 8–16 (TYSQAAAQQ), 17–27 (GYSAYTAQPTQ), 28–34 (GYAQTTQ), 35–42 (AYGQQSYG), 43–50 (TYGQPTDV), 51–59 (SYTQAQTTA), 60–68 (TYGQTAYAT), 69–75 (SYGQPPT), 76–84 (GYTTPTAPQ), 85–91 (AYSQPVQ), 92–110 (GYGT…TTQA), 111–116 (SYAAQS), 117–125 (AYGTQPAYP), 126–156 (AYGQ…SSTG), 157–163 (GYNQPSL), 164–170 (GYGQSNY), 171–177 (SYPQVPG), 178–188 (SYPMQPVTAPP), 189–193 (SYPPT), 194–201 (SYSSTQPT), 202–206 (SYDQS), 207–212 (SYSQQN), 213–218 (TYGQPS), 219–224 (SYGQQS), 225–230 (SYGQQS), 231–238 (SYGQQPPT), 239–245 (SYPPQTG), 246–252 (SYSQAPS), 253–259 (QYSQQSS), 260–276 (SYGQ…SSMG), and 277–285 (VYGQESGGF). The tract at residues 8 to 285 (TYSQAAAQQG…GVYGQESGGF (278 aa)) is 31 X approximate tandem repeats. Positions 123 to 137 (AYPAYGQQPAATAPT) are enriched in low complexity. A disordered region spans residues 123 to 360 (AYPAYGQQPA…PVDPDEDSDN (238 aa)). Over residues 143–172 (NKPTETSQPQSSTGGYNQPSLGYGQSNYSY) the composition is skewed to polar residues. Positions 192 to 266 (PTSYSSTQPT…QSSSYGQQSS (75 aa)) are enriched in low complexity. The 30-residue stretch at 256–285 (QQSSSYGQQSSFRQDHPSSMGVYGQESGGF) folds into the IQ domain. Phosphoserine; by PKC is present on S266. 7 positions are modified to asymmetric dimethylarginine: R300, R302, R304, R309, R314, R317, and R321. Residues 308–335 (DRGGMSRGGRGGGRGGMGSAGERGGFNK) show a composition bias toward gly residues. The span at 336-350 (PGGPMDEGPDLDLGP) shows a compositional bias: low complexity. The RRM domain maps to 361 to 447 (SAIYVQGLND…SKLKVSLARK (87 aa)). Position 439 is an N6-acetyllysine (K439). Disordered regions lie at residues 448–525 (KPPM…WQCP) and 547–656 (KPEG…DRPY). 2 positions are modified to asymmetric dimethylarginine: R455 and R464. R471 bears the Asymmetric dimethylarginine; alternate mark. Position 471 is an omega-N-methylarginine; alternate (R471). Positions 472-490 (GGPGGPGGPGGPMGRMGGR) are enriched in gly residues. The residue at position 486 (R486) is an Omega-N-methylarginine. R490 is subject to Asymmetric dimethylarginine; by PRMT8. R494, R500, and R503 each carry asymmetric dimethylarginine. The residue at position 506 (R506) is an Asymmetric dimethylarginine; alternate. R506 bears the Omega-N-methylarginine; alternate mark. The RanBP2-type zinc-finger motif lies at 518–549 (RAGDWQCPNPGCGNQNFAWRTECNQCKAPKPE). A compositionally biased stretch (pro residues) spans 551–560 (FLPPPFPPPG). Residues R563 and R565 each carry the asymmetric dimethylarginine modification. Residues 566–591 (GGPGGMRGGRGGLMDRGGPGGMFRGG) are compositionally biased toward gly residues. At R572 the chain carries Asymmetric dimethylarginine; alternate; by PRMT8. R572 carries the post-translational modification Omega-N-methylarginine; alternate; by PRMT8. Asymmetric dimethylarginine occurs at positions 575, 581, 589, and 592. Residues 592-606 (RGGDRGGFRGGRGMD) are compositionally biased toward basic and acidic residues. Position 596 is an asymmetric dimethylarginine; alternate; by PRMT8 (R596). The residue at position 596 (R596) is an Omega-N-methylarginine; alternate; by PRMT8. An Asymmetric dimethylarginine modification is found at R600. At R603 the chain carries Asymmetric dimethylarginine; by PRMT8. An Asymmetric dimethylarginine; alternate; by PRMT8 modification is found at R607. At R607 the chain carries Omega-N-methylarginine; alternate; by PRMT8. A compositionally biased stretch (gly residues) spans 607–618 (RGGFGGGRRGGP). R615 carries the post-translational modification Asymmetric dimethylarginine; alternate. R615 carries the omega-N-methylarginine; alternate modification. Residues R633 and R636 each carry the asymmetric dimethylarginine modification. The Nuclear localization signal motif lies at 639–656 (PGKMDKGEHRQERRDRPY). Residues 641–656 (KMDKGEHRQERRDRPY) are compositionally biased toward basic and acidic residues.

It belongs to the RRM TET family. As to quaternary structure, binds POLR2C, SF1, calmodulin and RNA. Interacts with PTK2B/FAK2 and TDRD3. Binds calmodulin in the presence, but not in the absence, of calcium ion. Forms a complex with REC8, PRDM9, SYCP3 and SYCP1; complex formation is dependent of phosphorylated form of REC8 and requires PRDM9 bound to hotspot DNA; EWSR1 joins PRDM9 with the chromosomal axis through REC8. Phosphorylated; calmodulin-binding inhibits phosphorylation of Ser-266. Post-translationally, highly methylated on arginine residues. Methylation is mediated by PRMT1 and, at lower level by PRMT8. Ubiquitous.

The protein resides in the nucleus. It is found in the cytoplasm. Its subcellular location is the cell membrane. Functionally, binds to ssRNA containing the consensus sequence 5'-AGGUAA-3'. Might normally function as a transcriptional repressor. EWS-fusion-proteins (EFPS) may play a role in the tumorigenic process. They may disturb gene expression by mimicking, or interfering with the normal function of CTD-POLII within the transcription initiation complex. They may also contribute to an aberrant activation of the fusion protein target genes. The polypeptide is RNA-binding protein EWS (EWSR1) (Homo sapiens (Human)).